The chain runs to 248 residues: MAARKNAGVLALFDVDGTLTAPRKVVTPEMLQFMKQLREHVTVGVVGGSDLVKISEQLGKSVTTDYDYCFSENGLVAHKNGELIGTQSLKSFLGDDQLKEFINFTLHYIADLDIPIKRGTFIEFRSGMLNVSPIGRNCSQEERDEFEKYDKVHNIRPKMVSVLREKFAHLNLTFSIGGQISFDVFPQGWDKTYCLRYLEEFQEIHFFGDKTYKGGNDYEIFESDRTIGHTVTSPDDTAEQCRSLFMSK.

Aspartate 14 serves as the catalytic Nucleophile. Residues aspartate 14 and aspartate 16 each coordinate Mg(2+). Aspartate 16 functions as the Proton donor/acceptor in the catalytic mechanism. The alpha-D-mannose 1-phosphate site is built by arginine 23, arginine 125, arginine 136, arginine 143, serine 181, and aspartate 183. 3 residues coordinate Mg(2+): aspartate 209, phenylalanine 221, and threonine 226.

The protein belongs to the eukaryotic PMM family. In terms of assembly, homodimer. Mg(2+) is required as a cofactor.

It localises to the cytoplasm. The enzyme catalyses alpha-D-mannose 1-phosphate = D-mannose 6-phosphate. It participates in nucleotide-sugar biosynthesis; GDP-alpha-D-mannose biosynthesis; alpha-D-mannose 1-phosphate from D-fructose 6-phosphate: step 2/2. Functionally, catalyzes the interconversion of mannose-6-phosphate to mannose-1-phosphate, the precursor for the synthesis of GDP-mannose. GDP-mannose is an essential sugar nucleotide for the synthesis of D-mannose-containing cell wall polysaccharides (galactomannans and glucomannans), glycolipids, glycoproteins and the antioxidant L-ascorbate. The protein is Phosphomannomutase of Oryza sativa subsp. indica (Rice).